Here is a 431-residue protein sequence, read N- to C-terminus: Glutamate-1-semialdehyde 2,1-aminomutase (431 aa).

At Lys-265 the chain carries N6-(pyridoxal phosphate)lysine.

It belongs to the class-III pyridoxal-phosphate-dependent aminotransferase family. HemL subfamily. In terms of assembly, homodimer. Requires pyridoxal 5'-phosphate as cofactor.

It localises to the cytoplasm. It carries out the reaction (S)-4-amino-5-oxopentanoate = 5-aminolevulinate. The protein operates within porphyrin-containing compound metabolism; protoporphyrin-IX biosynthesis; 5-aminolevulinate from L-glutamyl-tRNA(Glu): step 2/2. The sequence is that of Glutamate-1-semialdehyde 2,1-aminomutase from Vibrio vulnificus (strain CMCP6).